We begin with the raw amino-acid sequence, 144 residues long: Large ribosomal subunit protein uL15 (144 aa).

The span at 1-16 (MVVRKEKKSRKYRGYR) shows a compositional bias: basic residues. Positions 1–35 (MVVRKEKKSRKYRGYRTHGWGTKGQHRDRGAQGGR) are disordered.

It belongs to the universal ribosomal protein uL15 family. In terms of assembly, part of the 50S ribosomal subunit.

Binds to the 23S rRNA. The protein is Large ribosomal subunit protein uL15 of Sulfolobus acidocaldarius (strain ATCC 33909 / DSM 639 / JCM 8929 / NBRC 15157 / NCIMB 11770).